A 380-amino-acid polypeptide reads, in one-letter code: Putative S-(hydroxymethyl)glutathione dehydrogenase 2 (380 aa).

Residue Cys-50 participates in Zn(2+) binding. NAD(+) is bound at residue His-51. 7 residues coordinate Zn(2+): His-72, Glu-73, Cys-102, Cys-105, Cys-108, Cys-116, and Cys-179. NAD(+) is bound by residues 204 to 209 (GLGSVG), Asp-228, and 297 to 299 (IGV).

It belongs to the zinc-containing alcohol dehydrogenase family. Class-III subfamily. Zn(2+) is required as a cofactor.

It carries out the reaction a primary alcohol + NAD(+) = an aldehyde + NADH + H(+). It catalyses the reaction a secondary alcohol + NAD(+) = a ketone + NADH + H(+). The enzyme catalyses S-(hydroxymethyl)glutathione + NADP(+) = S-formylglutathione + NADPH + H(+). The catalysed reaction is S-(hydroxymethyl)glutathione + NAD(+) = S-formylglutathione + NADH + H(+). It carries out the reaction S-nitrosoglutathione + NADH + H(+) = S-(hydroxysulfenamide)glutathione + NAD(+). In terms of biological role, oxidizes long-chain alcohols and, in the presence of glutathione, is able to oxidize formaldehyde. Also acts as a S-nitroso-glutathione reductase by catalyzing the NADH-dependent reduction of S-nitrosoglutathione, thereby regulating protein S-nitrosylation. The chain is Putative S-(hydroxymethyl)glutathione dehydrogenase 2 from Schizosaccharomyces pombe (strain 972 / ATCC 24843) (Fission yeast).